A 259-amino-acid polypeptide reads, in one-letter code: Src-like-adapter 2 (259 aa).

Positions 1 to 20 (MGSLSSRGKTSSPSPSSSGP) are enriched in low complexity. A disordered region spans residues 1–30 (MGSLSSRGKTSSPSPSSSGPDQEPVSMQPE). The N-myristoyl glycine moiety is linked to residue glycine 2. The region spanning 31–91 (RHKVTAVALG…PSVYVAKVAH (61 aa)) is the SH3 domain. The region spanning 93 to 190 (WLYEGLSREK…GICCPLREPC (98 aa)) is the SH2 domain. Residues 190 to 259 (CVLQKLGPLP…SLAEDPLDDA (70 aa)) are SLA C-terminal.

Interacts (via its C-terminal domain) with CBL (phosphorylated). Interacts (via SH2 domain) with ZAP70 (phosphorylated) and CD3Z (phosphorylated). Interacts (via SH2 domain) with CSF1R (phosphorylated). Phosphorylated by CSF1R. In terms of tissue distribution, mainly expressed in immune system. Highly expressed in spleen and thymus and expressed at intermediate levels in lung. Not expressed in liver, heart and brain. Isoform 1 is predominant in lung and spleen, while isoform 2 is predominant in thymus.

It localises to the cytoplasm. Its subcellular location is the cell membrane. The protein resides in the cytoplasmic vesicle. It is found in the late endosome. Functionally, adapter protein, which negatively regulates T-cell receptor (TCR) signaling. Inhibits T-cell antigen-receptor induced activation of nuclear factor of activated T-cells. May act by linking signaling proteins such as ZAP70 with CBL, leading to a CBL dependent degradation of signaling proteins. This chain is Src-like-adapter 2 (Sla2), found in Mus musculus (Mouse).